A 240-amino-acid polypeptide reads, in one-letter code: UDP-2,3-diacylglucosamine hydrolase (240 aa).

Positions 8, 10, 41, 78, and 113 each coordinate Mn(2+). 78–79 (NR) lines the substrate pocket. Substrate is bound by residues Asp121, Ser159, Asn163, Lys166, and His194. The Mn(2+) site is built by His194 and His196.

It belongs to the LpxH family. Mn(2+) serves as cofactor.

It localises to the cell inner membrane. It carries out the reaction UDP-2-N,3-O-bis[(3R)-3-hydroxytetradecanoyl]-alpha-D-glucosamine + H2O = 2-N,3-O-bis[(3R)-3-hydroxytetradecanoyl]-alpha-D-glucosaminyl 1-phosphate + UMP + 2 H(+). The protein operates within glycolipid biosynthesis; lipid IV(A) biosynthesis; lipid IV(A) from (3R)-3-hydroxytetradecanoyl-[acyl-carrier-protein] and UDP-N-acetyl-alpha-D-glucosamine: step 4/6. Hydrolyzes the pyrophosphate bond of UDP-2,3-diacylglucosamine to yield 2,3-diacylglucosamine 1-phosphate (lipid X) and UMP by catalyzing the attack of water at the alpha-P atom. Involved in the biosynthesis of lipid A, a phosphorylated glycolipid that anchors the lipopolysaccharide to the outer membrane of the cell. This is UDP-2,3-diacylglucosamine hydrolase from Shewanella baltica (strain OS155 / ATCC BAA-1091).